The chain runs to 610 residues: Elongation factor 4 (610 aa).

A tr-type G domain is found at 11-193 (KYIRNFSIVA…QIVTKIPAPA (183 aa)). GTP is bound by residues 23-28 (DHGKST) and 140-143 (NKID).

Belongs to the TRAFAC class translation factor GTPase superfamily. Classic translation factor GTPase family. LepA subfamily.

The protein localises to the cell membrane. It catalyses the reaction GTP + H2O = GDP + phosphate + H(+). Functionally, required for accurate and efficient protein synthesis under certain stress conditions. May act as a fidelity factor of the translation reaction, by catalyzing a one-codon backward translocation of tRNAs on improperly translocated ribosomes. Back-translocation proceeds from a post-translocation (POST) complex to a pre-translocation (PRE) complex, thus giving elongation factor G a second chance to translocate the tRNAs correctly. Binds to ribosomes in a GTP-dependent manner. In Levilactobacillus brevis (strain ATCC 367 / BCRC 12310 / CIP 105137 / JCM 1170 / LMG 11437 / NCIMB 947 / NCTC 947) (Lactobacillus brevis), this protein is Elongation factor 4.